The primary structure comprises 213 residues: Outer-membrane lipoprotein carrier protein (213 aa).

A signal peptide spans 1–23 (MKKLLKQSLLGFALVSMTGAAFA).

This sequence belongs to the LolA family. Monomer.

The protein resides in the periplasm. Its function is as follows. Participates in the translocation of lipoproteins from the inner membrane to the outer membrane. Only forms a complex with a lipoprotein if the residue after the N-terminal Cys is not an aspartate (The Asp acts as a targeting signal to indicate that the lipoprotein should stay in the inner membrane). The chain is Outer-membrane lipoprotein carrier protein from Actinobacillus pleuropneumoniae serotype 3 (strain JL03).